The primary structure comprises 68 residues: Large ribosomal subunit protein uL30 (68 aa).

This sequence belongs to the universal ribosomal protein uL30 family. Part of the 50S ribosomal subunit.

This is Large ribosomal subunit protein uL30 from Agrobacterium fabrum (strain C58 / ATCC 33970) (Agrobacterium tumefaciens (strain C58)).